Reading from the N-terminus, the 169-residue chain is Oleosin Ara h 10.0101 (169 aa).

2 helical membrane-spanning segments follow: residues 39–59 and 73–93; these read VIAV…AGLA and LFIL…LSVA. Basic and acidic residues predominate over residues 146–156; sequence KDVGQKTKEVG. A disordered region spans residues 146-169; it reads KDVGQKTKEVGQEIQTKAQDSKRT.

It belongs to the oleosin family. Expressed in seeds (at protein level).

It is found in the lipid droplet. The protein localises to the membrane. Functionally, may have a structural role to stabilize the lipid body during desiccation of the seed by preventing coalescence of the oil. Probably interacts with both lipid and phospholipid moieties of lipid bodies. May also provide recognition signals for specific lipase anchorage in lipolysis during seedling growth. The protein is Oleosin Ara h 10.0101 of Arachis hypogaea (Peanut).